A 219-amino-acid polypeptide reads, in one-letter code: ATP-dependent Clp protease proteolytic subunit 4 (219 aa).

Catalysis depends on Ser-125, which acts as the Nucleophile. The active site involves His-150.

It belongs to the peptidase S14 family. In terms of assembly, fourteen ClpP subunits assemble into 2 heptameric rings which stack back to back to give a disk-like structure with a central cavity, resembling the structure of eukaryotic proteasomes.

It localises to the cytoplasm. It catalyses the reaction Hydrolysis of proteins to small peptides in the presence of ATP and magnesium. alpha-casein is the usual test substrate. In the absence of ATP, only oligopeptides shorter than five residues are hydrolyzed (such as succinyl-Leu-Tyr-|-NHMec, and Leu-Tyr-Leu-|-Tyr-Trp, in which cleavage of the -Tyr-|-Leu- and -Tyr-|-Trp bonds also occurs).. In terms of biological role, cleaves peptides in various proteins in a process that requires ATP hydrolysis. Has a chymotrypsin-like activity. Plays a major role in the degradation of misfolded proteins. This chain is ATP-dependent Clp protease proteolytic subunit 4, found in Prochlorococcus marinus (strain MIT 9312).